A 286-amino-acid chain; its full sequence is uncharacterized protein (286 aa).

The 243-residue stretch at 26–268 (PLIILCHGFC…DACHYDIYEG (243 aa)) folds into the AB hydrolase-1 domain.

Belongs to the AB hydrolase superfamily.

This is an uncharacterized protein from Escherichia coli.